The primary structure comprises 125 residues: Small ribosomal subunit protein uS13 (125 aa).

Belongs to the universal ribosomal protein uS13 family. Part of the 30S ribosomal subunit. Forms a loose heterodimer with protein S19. Forms two bridges to the 50S subunit in the 70S ribosome.

In terms of biological role, located at the top of the head of the 30S subunit, it contacts several helices of the 16S rRNA. In the 70S ribosome it contacts the 23S rRNA (bridge B1a) and protein L5 of the 50S subunit (bridge B1b), connecting the 2 subunits; these bridges are implicated in subunit movement. Contacts the tRNAs in the A and P-sites. In Rickettsia rickettsii (strain Iowa), this protein is Small ribosomal subunit protein uS13.